Here is a 436-residue protein sequence, read N- to C-terminus: Trigger factor (436 aa).

A PPIase FKBP-type domain is found at 163 to 248 (GDRVTVDFEG…VKKIEAAHLP (86 aa)).

It belongs to the FKBP-type PPIase family. Tig subfamily.

The protein resides in the cytoplasm. The catalysed reaction is [protein]-peptidylproline (omega=180) = [protein]-peptidylproline (omega=0). Functionally, involved in protein export. Acts as a chaperone by maintaining the newly synthesized protein in an open conformation. Functions as a peptidyl-prolyl cis-trans isomerase. This Paracidovorax citrulli (strain AAC00-1) (Acidovorax citrulli) protein is Trigger factor.